The primary structure comprises 298 residues: Bifunctional protein FolD (298 aa).

NADP(+) is bound by residues 167-169, S192, and V233; that span reads GRS.

The protein belongs to the tetrahydrofolate dehydrogenase/cyclohydrolase family. Homodimer.

The catalysed reaction is (6R)-5,10-methylene-5,6,7,8-tetrahydrofolate + NADP(+) = (6R)-5,10-methenyltetrahydrofolate + NADPH. It carries out the reaction (6R)-5,10-methenyltetrahydrofolate + H2O = (6R)-10-formyltetrahydrofolate + H(+). It participates in one-carbon metabolism; tetrahydrofolate interconversion. Catalyzes the oxidation of 5,10-methylenetetrahydrofolate to 5,10-methenyltetrahydrofolate and then the hydrolysis of 5,10-methenyltetrahydrofolate to 10-formyltetrahydrofolate. This chain is Bifunctional protein FolD, found in Chelativorans sp. (strain BNC1).